The following is a 300-amino-acid chain: Diaminopimelate epimerase (300 aa).

Substrate contacts are provided by N15, Q47, and N67. Residue C76 is the Proton donor of the active site. Substrate contacts are provided by residues 77–78 (GN), N163, N197, and 215–216 (ER). The Proton acceptor role is filled by C224. 225–226 (GS) is a binding site for substrate. A disordered region spans residues 275-300 (SGTFDPATGEWSRDAQNDKPTDRGAA). Residues 285-300 (WSRDAQNDKPTDRGAA) show a composition bias toward basic and acidic residues.

This sequence belongs to the diaminopimelate epimerase family. In terms of assembly, homodimer.

It localises to the cytoplasm. The enzyme catalyses (2S,6S)-2,6-diaminopimelate = meso-2,6-diaminopimelate. It participates in amino-acid biosynthesis; L-lysine biosynthesis via DAP pathway; DL-2,6-diaminopimelate from LL-2,6-diaminopimelate: step 1/1. In terms of biological role, catalyzes the stereoinversion of LL-2,6-diaminopimelate (L,L-DAP) to meso-diaminopimelate (meso-DAP), a precursor of L-lysine and an essential component of the bacterial peptidoglycan. This Brucella anthropi (strain ATCC 49188 / DSM 6882 / CCUG 24695 / JCM 21032 / LMG 3331 / NBRC 15819 / NCTC 12168 / Alc 37) (Ochrobactrum anthropi) protein is Diaminopimelate epimerase.